The chain runs to 419 residues: Hyaluronan synthase (419 aa).

The next 5 helical transmembrane spans lie at 8 to 28 (LIVLSFICLISILIYLNMYLF), 33 to 53 (VGIYGVILITYLVIKLGLSFL), 318 to 338 (IVALWTIFEVVMFMMLIVAIG), 345 to 365 (AIQLDLIKLFAFLSIIFIVAL), and 376 to 396 (PASFLLSPLYGILHLFVLQPL).

It belongs to the NodC/HAS family. The cofactor is Mg(2+).

It is found in the cell membrane. It carries out the reaction [hyaluronan](n) + UDP-N-acetyl-alpha-D-glucosamine = N-acetyl-beta-D-glucosaminyl-(1-&gt;4)-[hyaluronan](n) + UDP + H(+). The enzyme catalyses N-acetyl-beta-D-glucosaminyl-(1-&gt;4)-[hyaluronan](n) + UDP-alpha-D-glucuronate = [hyaluronan](n+1) + UDP + H(+). Its pathway is glycan biosynthesis; hyaluronan biosynthesis. Its function is as follows. Glycosaminoglycan synthesis. The hyaluronic acid capsule is involved in the pathogenicity of group A Streptococci; it may be the major virulence determinant. The sequence is that of Hyaluronan synthase (hasA) from Streptococcus pyogenes serotype M3 (strain ATCC BAA-595 / MGAS315).